A 716-amino-acid chain; its full sequence is Zinc finger protein 840 (716 aa).

A KRAB domain is found at 42–113; that stretch reads VRFRDVAVVF…EREVTGDPCP (72 aa). 18 C2H2-type zinc fingers span residues 151-173, 207-229, 235-257, 277-299, 305-327, 333-355, 361-383, 389-411, 417-439, 445-467, 473-495, 501-523, 549-571, 577-599, 605-627, 633-655, 661-683, and 689-711; these read YECD…QKIH, FECN…QSMH, YKCD…QRFH, FSCN…LLIH, YTCN…QRTH, HKCD…QKTH, FSCN…QQIH, FICS…KGTH, YQCT…QKTH, FACN…KKIH, YECG…KKIH, FVCN…QRTH, FPCN…QQIH, FTCN…KKIH, and FVCN…QITH. The disordered stretch occupies residues 515–548; that stretch reads KLSRHQRTHNKKENSSKSVSNLNKHQKTHAGEKP.

This sequence belongs to the krueppel C2H2-type zinc-finger protein family.

The protein resides in the nucleus. In terms of biological role, may be involved in transcriptional regulation. In Homo sapiens (Human), this protein is Zinc finger protein 840 (ZNF840P).